Here is a 362-residue protein sequence, read N- to C-terminus: DNA replication and repair protein RecF (362 aa).

30 to 37 serves as a coordination point for ATP; it reads GLNAQGKS.

The protein belongs to the RecF family.

Its subcellular location is the cytoplasm. The RecF protein is involved in DNA metabolism; it is required for DNA replication and normal SOS inducibility. RecF binds preferentially to single-stranded, linear DNA. It also seems to bind ATP. The protein is DNA replication and repair protein RecF of Thermoanaerobacter sp. (strain X514).